We begin with the raw amino-acid sequence, 415 residues long: UDP-N-acetylglucosamine 1-carboxyvinyltransferase (415 aa).

Phosphoenolpyruvate is bound at residue Lys-22–Asn-23. Residue Arg-92 participates in UDP-N-acetyl-alpha-D-glucosamine binding. Cys-116 acts as the Proton donor in catalysis. Cys-116 is subject to 2-(S-cysteinyl)pyruvic acid O-phosphothioketal. UDP-N-acetyl-alpha-D-glucosamine contacts are provided by residues Arg-121–Leu-125, Asp-304, and Val-326.

The protein belongs to the EPSP synthase family. MurA subfamily.

Its subcellular location is the cytoplasm. The enzyme catalyses phosphoenolpyruvate + UDP-N-acetyl-alpha-D-glucosamine = UDP-N-acetyl-3-O-(1-carboxyvinyl)-alpha-D-glucosamine + phosphate. It participates in cell wall biogenesis; peptidoglycan biosynthesis. In terms of biological role, cell wall formation. Adds enolpyruvyl to UDP-N-acetylglucosamine. In Halothermothrix orenii (strain H 168 / OCM 544 / DSM 9562), this protein is UDP-N-acetylglucosamine 1-carboxyvinyltransferase.